The sequence spans 273 residues: NADPH-dependent 7-cyano-7-deazaguanine reductase (273 aa).

80–82 (VES) contributes to the substrate binding site. 82-83 (SK) contributes to the NADPH binding site. Catalysis depends on cysteine 180, which acts as the Thioimide intermediate. Aspartate 187 serves as the catalytic Proton donor. 219 to 220 (HE) serves as a coordination point for substrate. Residue 248-249 (RG) participates in NADPH binding.

This sequence belongs to the GTP cyclohydrolase I family. QueF type 2 subfamily. Homodimer.

It is found in the cytoplasm. The enzyme catalyses 7-aminomethyl-7-carbaguanine + 2 NADP(+) = 7-cyano-7-deazaguanine + 2 NADPH + 3 H(+). The protein operates within tRNA modification; tRNA-queuosine biosynthesis. Functionally, catalyzes the NADPH-dependent reduction of 7-cyano-7-deazaguanine (preQ0) to 7-aminomethyl-7-deazaguanine (preQ1). The polypeptide is NADPH-dependent 7-cyano-7-deazaguanine reductase (Bordetella parapertussis (strain 12822 / ATCC BAA-587 / NCTC 13253)).